The sequence spans 445 residues: D-serine transporter DsdX (445 aa).

Residues 1-4 (MHSQ) lie on the Cytoplasmic side of the membrane. A helical membrane pass occupies residues 5–25 (IWVVSTLLISIVLIVLTIVKF). Topologically, residues 26-28 (KFH) are periplasmic. Residues 29 to 49 (PFLALLLASFFVGTMMGMGPL) traverse the membrane as a helical segment. The Cytoplasmic segment spans residues 50-56 (DMVNAIE). A helical transmembrane segment spans residues 57–77 (SGIGGTLGFLAAVIGLGTILG). The Periplasmic portion of the chain corresponds to 78-105 (KMMEVSGAAERIGLTLQRCRWLSVDVIM). A helical membrane pass occupies residues 106-126 (VLVGLICGITLFVEVGVVLLI). Residues 127–139 (PLAFSIAKKTNTS) lie on the Cytoplasmic side of the membrane. A helical membrane pass occupies residues 140-160 (LLKLAIPLCTALMAVHCVVPP). Residues 161–177 (HPAALYVANKLGADIGS) lie on the Periplasmic side of the membrane. Residues 178 to 198 (VIVYGLLVGLMASLIGGPLFL) form a helical membrane-spanning segment. Residues 199 to 223 (KFLGQRLPFKPVPTEFADLKVRDEK) lie on the Cytoplasmic side of the membrane. A helical transmembrane segment spans residues 224–244 (TLPSLGATLFTILLPIALMLV). Residues 245–257 (KTIAELNMARESG) lie on the Periplasmic side of the membrane. Residues 258–278 (LYILVEFIGNPITAMFIAVFV) traverse the membrane as a helical segment. At 279-301 (AYYVLGIRQHMSMGTMLTHTENG) the chain is on the cytoplasmic side. Residues 302–322 (FGSIANILLIIGAGGAFNAIL) form a helical membrane-spanning segment. Residues 323–342 (KSSSLADTLAVILSNMHMHP) lie on the Periplasmic side of the membrane. The next 3 membrane-spanning stretches (helical) occupy residues 343–363 (ILLA…ATVA), 364–384 (MMGA…ISPE), and 385–405 (IIAI…DSLF). Residues 406-424 (WLVKQYCGATLNETFKYYT) are Cytoplasmic-facing. A helical transmembrane segment spans residues 425-445 (TATFIASVVALAGTFLLSFII).

This sequence belongs to the GntP permease family.

It is found in the cell inner membrane. Functionally, a D-serine-specific transporter, may function as a H(+) symporter. This is D-serine transporter DsdX from Escherichia coli (strain K12).